The following is a 278-amino-acid chain: Rhomboid protease GlpG (278 aa).

The next 6 membrane-spanning stretches (helical) occupy residues 94–114, 143–163, 175–195, 196–216, 224–241, and 245–267; these read AGPL…LMLI, AFLH…WYLG, LLVL…LFSG, ANFG…WLTG, ISLP…LIAG, and ILGL…LMAF. Ser-202 (nucleophile) is an active-site residue. His-255 is a catalytic residue.

This sequence belongs to the peptidase S54 family.

It localises to the cell inner membrane. It catalyses the reaction Cleaves type-1 transmembrane domains using a catalytic dyad composed of serine and histidine that are contributed by different transmembrane domains.. Functionally, rhomboid-type serine protease that catalyzes intramembrane proteolysis. The protein is Rhomboid protease GlpG of Yersinia pestis bv. Antiqua (strain Antiqua).